Here is a 243-residue protein sequence, read N- to C-terminus: UPF0246 protein SpyM3_1790 (243 aa).

The protein belongs to the UPF0246 family.

This is UPF0246 protein SpyM3_1790 from Streptococcus pyogenes serotype M3 (strain ATCC BAA-595 / MGAS315).